Here is a 143-residue protein sequence, read N- to C-terminus: Envelope protein A28 homolog (143 aa).

A helical; Signal-anchor for type II membrane protein membrane pass occupies residues 1–21 (MNTVQILVVILITTALSFLVF). At 22 to 143 (QLWYYAENYE…LLRLLMANTS (122 aa)) the chain is on the virion surface side.

The protein belongs to the poxviridae A28 protein family. Contains two intramolecular disulfide bonds. They are created by the viral disulfide bond formation pathway, a poxvirus-specific pathway that operates on the cytoplasmic side of the MV membranes.

The protein localises to the virion membrane. In terms of biological role, envelope protein required for virus entry into host cell and for cell-cell fusion (syncytium formation). The sequence is that of Envelope protein A28 homolog from Amsacta (AmEPV).